A 212-amino-acid polypeptide reads, in one-letter code: Peptide methionine sulfoxide reductase MsrA (212 aa).

The active site involves C52.

The protein belongs to the MsrA Met sulfoxide reductase family.

The catalysed reaction is L-methionyl-[protein] + [thioredoxin]-disulfide + H2O = L-methionyl-(S)-S-oxide-[protein] + [thioredoxin]-dithiol. It catalyses the reaction [thioredoxin]-disulfide + L-methionine + H2O = L-methionine (S)-S-oxide + [thioredoxin]-dithiol. Its function is as follows. Has an important function as a repair enzyme for proteins that have been inactivated by oxidation. Catalyzes the reversible oxidation-reduction of methionine sulfoxide in proteins to methionine. This is Peptide methionine sulfoxide reductase MsrA from Salmonella agona (strain SL483).